A 249-amino-acid polypeptide reads, in one-letter code: DNA polymerase sliding clamp (249 aa).

It belongs to the PCNA family. Homotrimer. The subunits circularize to form a toroid; DNA passes through its center. Replication factor C (RFC) is required to load the toroid on the DNA.

Functionally, sliding clamp subunit that acts as a moving platform for DNA processing. Responsible for tethering the catalytic subunit of DNA polymerase and other proteins to DNA during high-speed replication. The polypeptide is DNA polymerase sliding clamp (Thermococcus gammatolerans (strain DSM 15229 / JCM 11827 / EJ3)).